Here is a 24-residue protein sequence, read N- to C-terminus: Ascaphin-7 (24 aa).

Expressed by the skin glands.

Its subcellular location is the secreted. Functionally, antimicrobial peptide that shows higher potency against Gram-negative bacteria than against Gram-positive bacteria. Has a very week hemolytic activity. The polypeptide is Ascaphin-7 (Ascaphus truei (Coastal tailed frog)).